The following is a 388-amino-acid chain: Chorismate synthase (388 aa).

R39 and R45 together coordinate NADP(+). FMN is bound by residues 132–134, 251–252, G296, 311–315, and R337; these read RSS, NA, and KPIPT.

This sequence belongs to the chorismate synthase family. In terms of assembly, homotetramer. Requires FMNH2 as cofactor.

The catalysed reaction is 5-O-(1-carboxyvinyl)-3-phosphoshikimate = chorismate + phosphate. It participates in metabolic intermediate biosynthesis; chorismate biosynthesis; chorismate from D-erythrose 4-phosphate and phosphoenolpyruvate: step 7/7. Catalyzes the anti-1,4-elimination of the C-3 phosphate and the C-6 proR hydrogen from 5-enolpyruvylshikimate-3-phosphate (EPSP) to yield chorismate, which is the branch point compound that serves as the starting substrate for the three terminal pathways of aromatic amino acid biosynthesis. This reaction introduces a second double bond into the aromatic ring system. This chain is Chorismate synthase, found in Staphylococcus aureus (strain MW2).